The chain runs to 477 residues: Penton protein (477 aa).

It belongs to the adenoviridae penton family. In terms of assembly, interacts with the fiber protein (via N-terminal tail region). Interacts with the capsid vertex protein; this interaction binds the penton base to neighboring peripentonal hexons.

The protein resides in the virion. The protein localises to the host nucleus. Its function is as follows. Major capsid protein that self-associates to form penton base pentamers, each in the shape of a pentagon, situated at the 12 vertices of the pseudo T=25 capsid. Involved in virus secondary attachment to host cell after initial attachment by the fiber protein, and in endocytosis of virions. As the virus enters the host cell, penton proteins are shed concomitant with virion acidification in the endosome. This Canis lupus familiaris (Dog) protein is Penton protein.